Reading from the N-terminus, the 588-residue chain is Adenine deaminase (588 aa).

Belongs to the metallo-dependent hydrolases superfamily. Adenine deaminase family. As to quaternary structure, homodimer. It depends on Mn(2+) as a cofactor.

The enzyme catalyses adenine + H2O + H(+) = hypoxanthine + NH4(+). The sequence is that of Adenine deaminase from Escherichia coli O6:H1 (strain CFT073 / ATCC 700928 / UPEC).